The following is a 408-amino-acid chain: Arginine biosynthesis bifunctional protein ArgJ (408 aa).

Positions 156, 182, 193, 279, 403, and 408 each coordinate substrate. The Nucleophile role is filled by T193.

This sequence belongs to the ArgJ family. As to quaternary structure, heterotetramer of two alpha and two beta chains.

Its subcellular location is the cytoplasm. The enzyme catalyses N(2)-acetyl-L-ornithine + L-glutamate = N-acetyl-L-glutamate + L-ornithine. The catalysed reaction is L-glutamate + acetyl-CoA = N-acetyl-L-glutamate + CoA + H(+). Its pathway is amino-acid biosynthesis; L-arginine biosynthesis; L-ornithine and N-acetyl-L-glutamate from L-glutamate and N(2)-acetyl-L-ornithine (cyclic): step 1/1. The protein operates within amino-acid biosynthesis; L-arginine biosynthesis; N(2)-acetyl-L-ornithine from L-glutamate: step 1/4. Functionally, catalyzes two activities which are involved in the cyclic version of arginine biosynthesis: the synthesis of N-acetylglutamate from glutamate and acetyl-CoA as the acetyl donor, and of ornithine by transacetylation between N(2)-acetylornithine and glutamate. This is Arginine biosynthesis bifunctional protein ArgJ from Bordetella pertussis (strain Tohama I / ATCC BAA-589 / NCTC 13251).